We begin with the raw amino-acid sequence, 342 residues long: Aristolochene synthase prx2 (342 aa).

Mg(2+)-binding residues include D115, N244, S248, and E252. (2E,6E)-farnesyl diphosphate contacts are provided by R340 and Y341.

The protein belongs to the terpene synthase family. As to quaternary structure, homodimer. Requires Mg(2+) as cofactor.

It catalyses the reaction (2E,6E)-farnesyl diphosphate = (+)-aristolochene + diphosphate. The protein operates within sesquiterpene biosynthesis; aristolochene biosynthesis; aristolochene from farnesyl diphosphate: step 1/1. Aristolochene synthase; part of the gene cluster that mediates the biosynthesis of PR-toxin, a bicyclic sesquiterpene belonging to the eremophilane class and acting as a mycotoxin. The first step of the pathway is catalyzed by the aristolochene synthase which performs the cyclization of trans,trans-farnesyl diphosphate (FPP) to the bicyclic sesquiterpene aristolochene. Following the formation of aristolochene, the non-oxygenated aristolochene is converted to the trioxygenated intermediate eremofortin B, via 7-epi-neopetasone. This conversion appears to involve three enzymes, a hydroxysterol oxidase-like enzyme, the quinone-oxidase prx3 that forms the quinone-type-structure in the bicyclic nucleus of aristolochene with the C8-oxo group and the C-3 hydroxyl group, and the P450 monooxygenase prx9 that introduces the epoxide at the double bond between carbons 1 and 2. No monoxy or dioxy-intermediates have been reported to be released to the broth, so these three early oxidative reactions may be coupled together. Eremofortin B is further oxidized by another P450 monooxygenase, that introduces a second epoxide between carbons 7 and 11 prior to acetylation to eremofortin A by the acetyltransferase prx11. The second epoxidation may be performed by a second P450 monooxygenase. After the acetylation step, the conversion of eremofortin A to eremofortin C and then to PR-toxin requires only two enzymes. First the conversion of eremofortin A to eremofortin C proceeds by oxidation of the side chain of the molecule at C-12 and is catalyzed by the short-chain oxidoreductase prx1. The cytochrome P450 monooxygenase prx8 also plays a role in this step. The primary alcohol formed at C-12 is finally oxidized by the short-chain alcohol dehydrogenase prx4 that forms PR-toxin. The polypeptide is Aristolochene synthase prx2 (Penicillium rubens (strain ATCC 28089 / DSM 1075 / NRRL 1951 / Wisconsin 54-1255) (Penicillium chrysogenum)).